The following is a 118-amino-acid chain: Holo-[acyl-carrier-protein] synthase (118 aa).

Mg(2+) is bound by residues Asp8 and Glu58.

The protein belongs to the P-Pant transferase superfamily. AcpS family. Mg(2+) is required as a cofactor.

The protein resides in the cytoplasm. It carries out the reaction apo-[ACP] + CoA = holo-[ACP] + adenosine 3',5'-bisphosphate + H(+). Functionally, transfers the 4'-phosphopantetheine moiety from coenzyme A to a Ser of acyl-carrier-protein. This Listeria welshimeri serovar 6b (strain ATCC 35897 / DSM 20650 / CCUG 15529 / CIP 8149 / NCTC 11857 / SLCC 5334 / V8) protein is Holo-[acyl-carrier-protein] synthase.